The following is a 193-amino-acid chain: Transcriptional repressor NrdR (193 aa).

The segment at 3 to 34 (CPYCGGLDTQVKDSRPSEDASAIRRRRICPDC) is a zinc-finger region. An ATP-cone domain is found at 49 to 139 (LTVVKRSGRK…VYKNFREAKD (91 aa)). Residues 150–193 (DQQDGAVPQAEADRPIGAGPPSEAAQPAAGEGGDAPMRRARSRA) are disordered.

It belongs to the NrdR family. Requires Zn(2+) as cofactor.

Its function is as follows. Negatively regulates transcription of bacterial ribonucleotide reductase nrd genes and operons by binding to NrdR-boxes. The polypeptide is Transcriptional repressor NrdR (Methylobacterium nodulans (strain LMG 21967 / CNCM I-2342 / ORS 2060)).